Here is a 294-residue protein sequence, read N- to C-terminus: 2-dehydro-3-deoxy-phosphogluconate/2-dehydro-3-deoxy-6-phosphogalactonate aldolase (294 aa).

Residues 43–44, 130–132, and 155–157 contribute to the substrate site; these read TT, YNY, and KDT. Lys155 (schiff-base intermediate with substrate) is an active-site residue.

The protein belongs to the DapA family. KDPG aldolase subfamily. Homotetramer; dimer of dimers.

It carries out the reaction 2-dehydro-3-deoxy-6-phospho-D-gluconate = D-glyceraldehyde 3-phosphate + pyruvate. The enzyme catalyses 2-dehydro-3-deoxy-6-phospho-D-galactonate = D-glyceraldehyde 3-phosphate + pyruvate. It participates in carbohydrate acid metabolism; 2-dehydro-3-deoxy-D-gluconate degradation; D-glyceraldehyde 3-phosphate and pyruvate from 2-dehydro-3-deoxy-D-gluconate: step 2/2. Involved in the degradation of glucose and galactose via the Entner-Doudoroff pathway. Catalyzes the reversible cleavage of 2-keto-3-deoxy-6-phosphogluconate (KDPG) and 2-keto-3-deoxygluconate (KDG) forming pyruvate and glyceraldehyde 3-phosphate or glyceraldehyde, respectively. It is also able to catalyze the reversible cleavage of 2-keto-3-deoxy-6-phosphogalactonate (KDPGal) and 2-keto-3-deoxygalactonate (KDGal). It is equally active with both D- and L-glyceraldehyde. The chain is 2-dehydro-3-deoxy-phosphogluconate/2-dehydro-3-deoxy-6-phosphogalactonate aldolase from Saccharolobus solfataricus (Sulfolobus solfataricus).